An 839-amino-acid chain; its full sequence is MEGGPLEPLEDLSGIEENSIIPLDSILPPELFLIPIKSRPVFPGIITPLIVPSGKFAKAVEETVKGNSFLGLVLLKDEENEKETSENIYQYGVVAKILKKVNLPDNAVNILVNTIRRFKIESFVNKDPLVARVSYPEEEPGAPKNTTKAMMRTLLVMTRELAQNNPLFTEEMKLTMLNVNEPGKMADFVCSILNLEKEEYQSVIESNILKTRIEKVLLFLKKEIELVSIQREISDQIQDKIDKQQRQFFLREQLKAIQNELGIKDDKFEKKYEKFLERLKNLNADPEVIEEVTRELDKFSYADPNTGDYNVIRNYLDILESLPWEPAPVREIDLEKAKKTLDKDHYKLEDVKDRILEFLAVKKLKNDEKGTILLLVGPPGVGKTSIARSIAEAMGRKFFRFSVGGMRDEAEIKGHRRTYIGSMPGKIISALRITKERDCVILLDEIDKLSIGIQGDPASALLEVLDPEQNKNFRDHYLDLPFDISNVFFIATANTLDSISRILLDRMEIINLSGYITDEKVQIFQKYLWKKVLYKNGVTPYGIEFDKKAIVALIDSYSRESGVRGLEKVTDKLVRKIAIKIVRKESFPKIIQEKDLETFLGVPKFTDERMVRASVPGTALGLAWTSVGGATLLIEALFVKGKGGILLTGMLGKTMEESSNIALSYIKNLLYKEELFNNRMIHLHVPDGATPKDGPSAGITMASAILSLALNTKVKSGFGMTGELTLTGEVLAIGGLREKIVAAKRVGIHKIIYPKDNLQHLQEIPDYVKKGMYFFPVSRYEEVALLLFDEKVISKINPSFRENLKSIVNPTRKLSPKKKTTQKQKLSLSKQKGNNQKKK.

In terms of domain architecture, Lon N-terminal spans 31–224 (LFLIPIKSRP…KVLLFLKKEI (194 aa)). Residue 377–384 (GPPGVGKT) coordinates ATP. Residues 613–790 (ASVPGTALGL…EEVALLLFDE (178 aa)) enclose the Lon proteolytic domain. Active-site residues include Ser696 and Lys739. The disordered stretch occupies residues 807 to 839 (IVNPTRKLSPKKKTTQKQKLSLSKQKGNNQKKK). Positions 823 to 832 (KQKLSLSKQK) are enriched in low complexity.

It belongs to the peptidase S16 family. In terms of assembly, homohexamer. Organized in a ring with a central cavity.

The protein resides in the cytoplasm. The enzyme catalyses Hydrolysis of proteins in presence of ATP.. Functionally, ATP-dependent serine protease that mediates the selective degradation of mutant and abnormal proteins as well as certain short-lived regulatory proteins. Required for cellular homeostasis and for survival from DNA damage and developmental changes induced by stress. Degrades polypeptides processively to yield small peptide fragments that are 5 to 10 amino acids long. Binds to DNA in a double-stranded, site-specific manner. This is Lon protease from Leptospira interrogans serogroup Icterohaemorrhagiae serovar copenhageni (strain Fiocruz L1-130).